The chain runs to 509 residues: Galactose-1-phosphate uridylyltransferase (509 aa).

Belongs to the galactose-1-phosphate uridylyltransferase type 2 family.

Its subcellular location is the cytoplasm. The enzyme catalyses alpha-D-galactose 1-phosphate + UDP-alpha-D-glucose = alpha-D-glucose 1-phosphate + UDP-alpha-D-galactose. It participates in carbohydrate metabolism; galactose metabolism. The polypeptide is Galactose-1-phosphate uridylyltransferase (Fusobacterium nucleatum subsp. nucleatum (strain ATCC 25586 / DSM 15643 / BCRC 10681 / CIP 101130 / JCM 8532 / KCTC 2640 / LMG 13131 / VPI 4355)).